The following is a 447-amino-acid chain: Glutamyl-tRNA reductase (447 aa).

Substrate is bound by residues 56–59 (TCNR), serine 119, 124–126 (ETQ), and glutamine 130. Cysteine 57 (nucleophile) is an active-site residue. 201–206 (GLGEMS) serves as a coordination point for NADP(+).

The protein belongs to the glutamyl-tRNA reductase family. In terms of assembly, homodimer.

The enzyme catalyses (S)-4-amino-5-oxopentanoate + tRNA(Glu) + NADP(+) = L-glutamyl-tRNA(Glu) + NADPH + H(+). Its pathway is porphyrin-containing compound metabolism; protoporphyrin-IX biosynthesis; 5-aminolevulinate from L-glutamyl-tRNA(Glu): step 1/2. Functionally, catalyzes the NADPH-dependent reduction of glutamyl-tRNA(Glu) to glutamate 1-semialdehyde (GSA). This Helicobacter acinonychis (strain Sheeba) protein is Glutamyl-tRNA reductase.